The primary structure comprises 225 residues: Membrane protein (225 aa).

The Virion surface segment spans residues 1–20; sequence MSNETNCTLDFEQSVELFKE. The helical transmembrane segment at 21 to 41 threads the bilayer; it reads YNLFITAFLLFLTIILQYGYA. Residues 42-51 are Intravirion-facing; that stretch reads TRIRFIYILK. The chain crosses the membrane as a helical span at residues 52-72; sequence MIVLWCFWPLNIAVGVISCIY. The Virion surface segment spans residues 73–77; that stretch reads PPNTG. The helical transmembrane segment at 78 to 98 threads the bilayer; it reads GLVAAIILTVFACLSFVGYWI. Residues 99 to 225 lie on the Intravirion side of the membrane; the sequence is QSCRLFKRCR…VATGGSSLYT (127 aa).

It belongs to the gammacoronaviruses M protein family. Homomultimer. Interacts with envelope E protein in the budding compartment of the host cell, which is located between endoplasmic reticulum and the Golgi complex. Forms a complex with HE and S proteins. Interacts with nucleocapsid N protein. This interaction probably participates in RNA packaging into the virus.

Its subcellular location is the virion membrane. It localises to the host Golgi apparatus membrane. Its function is as follows. Component of the viral envelope that plays a central role in virus morphogenesis and assembly via its interactions with other viral proteins. The polypeptide is Membrane protein (Avian infectious bronchitis virus (strain KB8523) (IBV)).